The sequence spans 217 residues: ATP-dependent Clp protease proteolytic subunit (217 aa).

Catalysis depends on S119, which acts as the Nucleophile. H144 is an active-site residue.

Belongs to the peptidase S14 family. As to quaternary structure, fourteen ClpP subunits assemble into 2 heptameric rings which stack back to back to give a disk-like structure with a central cavity, resembling the structure of eukaryotic proteasomes.

Its subcellular location is the cytoplasm. It carries out the reaction Hydrolysis of proteins to small peptides in the presence of ATP and magnesium. alpha-casein is the usual test substrate. In the absence of ATP, only oligopeptides shorter than five residues are hydrolyzed (such as succinyl-Leu-Tyr-|-NHMec, and Leu-Tyr-Leu-|-Tyr-Trp, in which cleavage of the -Tyr-|-Leu- and -Tyr-|-Trp bonds also occurs).. In terms of biological role, cleaves peptides in various proteins in a process that requires ATP hydrolysis. Has a chymotrypsin-like activity. Plays a major role in the degradation of misfolded proteins. This is ATP-dependent Clp protease proteolytic subunit from Bordetella bronchiseptica (strain ATCC BAA-588 / NCTC 13252 / RB50) (Alcaligenes bronchisepticus).